The primary structure comprises 430 residues: Zinc finger and SCAN domain-containing protein 4 (430 aa).

Residues 1–38 are disordered; sequence MASDLRISFQGEPSRNDPGSENLEHKPSQGPAVQEEEE. One can recognise an SCAN box domain in the interval 44 to 126; the sequence is RTQLSLLQNS…KFMEDLTDES (83 aa). Positions 164–185 are enriched in polar residues; that stretch reads GSPTGTDMETPSWTPQDTSLET. Disordered regions lie at residues 164 to 196, 224 to 257, and 281 to 300; these read GSPT…KENG, YPRP…SLKG, and EPVP…GHQE. C2H2-type zinc fingers lie at residues 309–331, 337–359, 365–387, and 393–415; these read YRCE…QRRH, FTCA…QKIH, FTCS…ERIH, and YECS…LRNH.

It is found in the nucleus. The protein localises to the chromosome. It localises to the telomere. Functionally, embryonic stem (ES) cell-specific transcription factor required to regulate ES cell pluripotency. Binds telomeres and plays a key role in genomic stability in ES cells by regulating telomere elongation. Acts as an activator of spontaneous telomere sister chromatid exchange (T-SCE) and telomere elongation in undifferentiated ES cells. The protein is Zinc finger and SCAN domain-containing protein 4 (ZSCAN4) of Ailuropoda melanoleuca (Giant panda).